We begin with the raw amino-acid sequence, 645 residues long: Aminopeptidase P1 (645 aa).

Ser-2 is modified (N-acetylserine). Positions 69 and 420 each coordinate a peptide. Mn(2+) is bound by residues Asp-440, Asp-451, and His-514. Residues His-514, His-523, and Glu-549 each coordinate a peptide. Mn(2+) is bound by residues Glu-549 and Glu-563.

Belongs to the peptidase M24B family. Homodimer. Interacts with N-1-naphthylphthalamic acid (NPA). Mn(2+) is required as a cofactor. The cofactor is Zn(2+). In terms of processing, glycosylated. Also present in a non-glycosylated form. In terms of tissue distribution, ubiquitous with preferential expression in 5 days-old seedlings, roots, flowers, inflorescences and rosette leaves (at protein levels).

It is found in the cytoplasm. The protein localises to the cell membrane. It localises to the microsome membrane. The enzyme catalyses Release of any N-terminal amino acid, including proline, that is linked to proline, even from a dipeptide or tripeptide.. Inhibited by EGTA and apstatin, and, to some extent, by the flavonoid kaempferol. Catalyzes the removal of a penultimate prolyl residue from the N-termini of peptides, such as Arg-Pro-Pro. Aminopeptidase that binds to the auxin transport inhibitor N-1-naphthylphthalamic acid (NPA). May play a negative role in the regulation of PIN auxin transport proteins. In Arabidopsis thaliana (Mouse-ear cress), this protein is Aminopeptidase P1.